We begin with the raw amino-acid sequence, 360 residues long: Flavone O-methyltransferase 1 (360 aa).

127-133 (MNQDKVL) contributes to the substrate binding site. A substrate binding region spans residues 159–177 (AFEYHGTDPRFNRVFNEGM). S-adenosyl-L-methionine is bound by residues Gly-205, Asp-228, Asp-248, Met-249, and Lys-262. His-266 functions as the Proton acceptor in the catalytic mechanism.

This sequence belongs to the class I-like SAM-binding methyltransferase superfamily. Cation-independent O-methyltransferase family. COMT subfamily. Homodimer.

Functionally, flavone-specific O-methyltransferase with a preference for flavones &gt; flavonols. Active with tricetin, luteolin, quercitin and eriodictyol. Very low activity with phenylpropanoids (5-hydroxyferulic acid and caffeic acid). Catalyzes the sequential O-methylation of tricetin via 3'-O-methyltricetin, 3',5'-O-methyltricetin to 3',4',5'-O-trimethyltricetin. The protein is Flavone O-methyltransferase 1 (OMT1) of Triticum aestivum (Wheat).